Consider the following 143-residue polypeptide: Large ribosomal subunit protein uL16 (143 aa).

Residues 1–17 (MLQPKKTKFRRSQKGRM) show a composition bias toward basic residues. A disordered region spans residues 1 to 25 (MLQPKKTKFRRSQKGRMKGNAQRGN).

This sequence belongs to the universal ribosomal protein uL16 family. As to quaternary structure, part of the 50S ribosomal subunit.

Binds 23S rRNA and is also seen to make contacts with the A and possibly P site tRNAs. The protein is Large ribosomal subunit protein uL16 of Azobacteroides pseudotrichonymphae genomovar. CFP2.